Reading from the N-terminus, the 433-residue chain is UPF0597 protein PG_0909 (433 aa).

The protein belongs to the UPF0597 family.

The sequence is that of UPF0597 protein PG_0909 from Porphyromonas gingivalis (strain ATCC BAA-308 / W83).